The following is a 201-amino-acid chain: MAIGYPNGKKYAASHEVLPQQKRKAPVTYGKRGMSLEDDLNDTIAYYLTHEIAVIHKKPTPVQIVSVDYPKRSSAKIKEAYFKTPSTTDYNGVYKGKYVDFEAKETQNTTSFPLSNFHDHQMTHMANVLKQDGIVFVIIAFQKLGETHFIPFEKFYPFWERMQSGGRKSVTIAEIQDVSDQIPYGLNPRLDFLQSIDKLYF.

Mg(2+) is bound by residues Thr87, Asp89, Glu102, and Gln121.

The protein belongs to the RecU family. Mg(2+) is required as a cofactor.

The protein resides in the cytoplasm. It carries out the reaction Endonucleolytic cleavage at a junction such as a reciprocal single-stranded crossover between two homologous DNA duplexes (Holliday junction).. Endonuclease that resolves Holliday junction intermediates in genetic recombination. Cleaves mobile four-strand junctions by introducing symmetrical nicks in paired strands. Promotes annealing of linear ssDNA with homologous dsDNA. Required for DNA repair, homologous recombination and chromosome segregation. The protein is Holliday junction resolvase RecU of Listeria monocytogenes serotype 4b (strain F2365).